An 87-amino-acid chain; its full sequence is Small ribosomal subunit protein bS20 (87 aa).

Positions 1–24 are disordered; sequence MANTAQARKRARQSVERNKHNSSL.

It belongs to the bacterial ribosomal protein bS20 family.

In terms of biological role, binds directly to 16S ribosomal RNA. This is Small ribosomal subunit protein bS20 from Bordetella petrii (strain ATCC BAA-461 / DSM 12804 / CCUG 43448).